Consider the following 357-residue polypeptide: Phospho-N-acetylmuramoyl-pentapeptide-transferase (357 aa).

10 helical membrane passes run 23-43 (AIFS…YFIY), 70-90 (TMGG…YCNL), 91-111 (SNIY…IGFI), 127-147 (LKWK…MIKI), 171-191 (YLYV…VNLT), 196-216 (GLAI…SLFS), 236-256 (LAIL…FNSY), 260-280 (VFMG…IAIL), 286-306 (LLII…LQII), and 334-354 (LIIV…LISL).

Belongs to the glycosyltransferase 4 family. MraY subfamily. Mg(2+) serves as cofactor.

The protein resides in the cell inner membrane. It catalyses the reaction UDP-N-acetyl-alpha-D-muramoyl-L-alanyl-gamma-D-glutamyl-meso-2,6-diaminopimeloyl-D-alanyl-D-alanine + di-trans,octa-cis-undecaprenyl phosphate = di-trans,octa-cis-undecaprenyl diphospho-N-acetyl-alpha-D-muramoyl-L-alanyl-D-glutamyl-meso-2,6-diaminopimeloyl-D-alanyl-D-alanine + UMP. The protein operates within cell wall biogenesis; peptidoglycan biosynthesis. In terms of biological role, catalyzes the initial step of the lipid cycle reactions in the biosynthesis of the cell wall peptidoglycan: transfers peptidoglycan precursor phospho-MurNAc-pentapeptide from UDP-MurNAc-pentapeptide onto the lipid carrier undecaprenyl phosphate, yielding undecaprenyl-pyrophosphoryl-MurNAc-pentapeptide, known as lipid I. This is Phospho-N-acetylmuramoyl-pentapeptide-transferase from Buchnera aphidicola subsp. Acyrthosiphon pisum (strain Tuc7).